A 327-amino-acid chain; its full sequence is D-alanine--D-alanine ligase (327 aa).

One can recognise an ATP-grasp domain in the interval Lys-113–Ala-312. ATP is bound at residue Val-139–Thr-194. Residues Asp-266, Glu-279, and Asn-281 each contribute to the Mg(2+) site.

The protein belongs to the D-alanine--D-alanine ligase family. Mg(2+) serves as cofactor. Mn(2+) is required as a cofactor.

It is found in the cytoplasm. It catalyses the reaction 2 D-alanine + ATP = D-alanyl-D-alanine + ADP + phosphate + H(+). Its pathway is cell wall biogenesis; peptidoglycan biosynthesis. In terms of biological role, cell wall formation. The chain is D-alanine--D-alanine ligase from Cupriavidus pinatubonensis (strain JMP 134 / LMG 1197) (Cupriavidus necator (strain JMP 134)).